The sequence spans 161 residues: Nucleotide-binding protein AZOSEA28950 (161 aa).

It belongs to the YajQ family.

Its function is as follows. Nucleotide-binding protein. This Aromatoleum aromaticum (strain DSM 19018 / LMG 30748 / EbN1) (Azoarcus sp. (strain EbN1)) protein is Nucleotide-binding protein AZOSEA28950.